The primary structure comprises 651 residues: MBT domain-containing protein 1 (651 aa).

The disordered stretch occupies residues 21–55 (SFGMFDGYDSCSEDTSSSSSSDESEEEVAPLPSSL). Residues 29-41 (DSCSEDTSSSSSS) are compositionally biased toward low complexity. The FCS-type zinc finger occupies 68–103 (PDGKSGMATCEMCGMVGVRDAFYSKTKRFCSVSCSR). 4 residues coordinate Zn(2+): cysteine 77, cysteine 80, cysteine 97, and cysteine 101. 4 MBT repeats span residues 164–268 (FSWG…LVPP), 276–373 (TNWK…IGHR), 374–479 (FKRT…LTPP), and 487–583 (FKWF…LQPP). Disordered regions lie at residues 581 to 610 (QPPA…YKGH) and 629 to 651 (TFLQ…KQEP). The segment covering 586-596 (QSNKDSQSNIS) has biased composition (low complexity). Positions 597 to 610 (KQKKKSKSQPYKGH) are enriched in basic residues. The segment covering 632 to 643 (QGASDQESNGSG) has biased composition (polar residues).

In terms of assembly, monomer. Component of the NuA4 histone acetyltransferase complex.

It is found in the nucleus. The protein resides in the chromosome. Functionally, chromatin reader component of the NuA4 histone acetyltransferase complex, a multiprotein complex involved in transcriptional activation of select genes principally by acetylation of nucleosomal histones H4 and H2A. The NuA4 complex plays a direct role in repair of DNA double-strand breaks (DSBs) by promoting homologous recombination (HR). MBTD1 specifically recognizes and binds monomethylated and dimethylated 'Lys-20' on histone H4 (H4K20me1 and H4K20me2, respectively). In the NuA4 complex, MBTD1 promotes recruitment of the complex to H4K20me marks by competing with TP53BP1 for binding to H4K20me. Following recruitment to H4K20me at DNA breaks, the NuA4 complex catalyzes acetylation of 'Lys-15' on histone H2A (H2AK15), blocking the ubiquitination mark required for TP53BP1 localization at DNA breaks, thereby promoting homologous recombination (HR). The sequence is that of MBT domain-containing protein 1 from Xenopus tropicalis (Western clawed frog).